We begin with the raw amino-acid sequence, 74 residues long: Exodeoxyribonuclease 7 small subunit (74 aa).

It belongs to the XseB family. In terms of assembly, heterooligomer composed of large and small subunits.

Its subcellular location is the cytoplasm. The catalysed reaction is Exonucleolytic cleavage in either 5'- to 3'- or 3'- to 5'-direction to yield nucleoside 5'-phosphates.. Functionally, bidirectionally degrades single-stranded DNA into large acid-insoluble oligonucleotides, which are then degraded further into small acid-soluble oligonucleotides. This is Exodeoxyribonuclease 7 small subunit from Clostridium beijerinckii (strain ATCC 51743 / NCIMB 8052) (Clostridium acetobutylicum).